A 338-amino-acid polypeptide reads, in one-letter code: DNA-directed RNA polymerase subunit alpha (338 aa).

The segment at 1 to 225 (MLISQRPTIT…ELFGLARELN (225 aa)) is alpha N-terminal domain (alpha-NTD). Residues 240-338 (TEYIAAYSMP…YIDVEAEDSE (99 aa)) are alpha C-terminal domain (alpha-CTD). The disordered stretch occupies residues 319 to 338 (LEGYDAETGGYIDVEAEDSE).

The protein belongs to the RNA polymerase alpha chain family. In terms of assembly, homodimer. The RNAP catalytic core consists of 2 alpha, 1 beta, 1 beta' and 1 omega subunit. When a sigma factor is associated with the core the holoenzyme is formed, which can initiate transcription.

The enzyme catalyses RNA(n) + a ribonucleoside 5'-triphosphate = RNA(n+1) + diphosphate. In terms of biological role, DNA-dependent RNA polymerase catalyzes the transcription of DNA into RNA using the four ribonucleoside triphosphates as substrates. This chain is DNA-directed RNA polymerase subunit alpha, found in Corynebacterium glutamicum (strain R).